Reading from the N-terminus, the 582-residue chain is ATP-dependent lipid A-core flippase (582 aa).

Transmembrane regions (helical) follow at residues 15 to 35, 68 to 88, 140 to 160, 161 to 181, and 254 to 274; these read LWPI…ALVI, YVVV…SYCL, GALI…AVML, YTSW…AVLI, and VQII…VPTI. An ABC transmembrane type-1 domain is found at 27–310; that stretch reads VVSGIALVIN…LTNVNAQFQK (284 aa). The 237-residue stretch at 342 to 578 folds into the ABC transporter domain; that stretch reads LSFKNVTFTY…NGAYKQLHHI (237 aa). 376-383 is a binding site for ATP; that stretch reads GRSGSGKS.

It belongs to the ABC transporter superfamily. Lipid exporter (TC 3.A.1.106) family. In terms of assembly, homodimer.

It is found in the cell inner membrane. The catalysed reaction is ATP + H2O + lipid A-core oligosaccharideSide 1 = ADP + phosphate + lipid A-core oligosaccharideSide 2.. Its function is as follows. Involved in lipopolysaccharide (LPS) biosynthesis. Translocates lipid A-core from the inner to the outer leaflet of the inner membrane. Transmembrane domains (TMD) form a pore in the inner membrane and the ATP-binding domain (NBD) is responsible for energy generation. The polypeptide is ATP-dependent lipid A-core flippase (Pasteurella multocida (strain Pm70)).